We begin with the raw amino-acid sequence, 798 residues long: Integrin beta-1 (798 aa).

The N-terminal stretch at methionine 1–glycine 20 is a signal peptide. Topologically, residues glutamine 21–aspartate 728 are extracellular. In terms of domain architecture, PSI spans arginine 26 to histidine 76. Disulfide bonds link cysteine 27-cysteine 45, cysteine 35-cysteine 464, cysteine 38-cysteine 64, cysteine 48-cysteine 75, cysteine 207-cysteine 213, cysteine 261-cysteine 301, cysteine 401-cysteine 415, cysteine 435-cysteine 462, cysteine 466-cysteine 486, cysteine 477-cysteine 489, cysteine 491-cysteine 500, cysteine 502-cysteine 533, cysteine 516-cysteine 531, cysteine 525-cysteine 536, cysteine 538-cysteine 553, cysteine 555-cysteine 576, cysteine 560-cysteine 574, cysteine 568-cysteine 579, cysteine 581-cysteine 590, cysteine 592-cysteine 615, cysteine 599-cysteine 613, cysteine 607-cysteine 618, cysteine 620-cysteine 630, cysteine 633-cysteine 636, cysteine 640-cysteine 691, cysteine 646-cysteine 665, cysteine 649-cysteine 661, and cysteine 699-cysteine 723. Residues cysteine 75–lysine 91 are compositionally biased toward basic and acidic residues. Residues cysteine 75 to lysine 105 are disordered. N-linked (GlcNAc...) asparagine glycans are attached at residues asparagine 94 and asparagine 97. One can recognise a VWFA domain in the interval aspartate 140–leucine 378. Mg(2+) is bound by residues serine 152 and serine 154. Ca(2+) is bound by residues serine 154, aspartate 157, aspartate 158, and glutamate 189. The interval cysteine 207–cysteine 213 is CX3CL1-binding. Asparagine 212 carries N-linked (GlcNAc...) asparagine glycosylation. Residues asparagine 244, aspartate 246, proline 248, and glutamate 249 each coordinate Ca(2+). Glutamate 249 contributes to the Mg(2+) binding site. The N-linked (GlcNAc...) asparagine glycan is linked to asparagine 269. The interval leucine 295–tyrosine 314 is CX3CL1-binding. Alanine 362 contributes to the Ca(2+) binding site. The interaction with TMEM182 stretch occupies residues isoleucine 383–glutamate 465. Asparagine 406 and asparagine 417 each carry an N-linked (GlcNAc...) asparagine glycan. 4 I-EGF domains span residues cysteine 466–glutamate 501, cysteine 502–glutamate 554, cysteine 555–aspartate 591, and cysteine 592–glutamate 631. Asparagine 481 carries an N-linked (GlcNAc...) asparagine glycan. Residue asparagine 520 is glycosylated (N-linked (GlcNAc...) asparagine). Asparagine 584 carries N-linked (GlcNAc...) asparagine glycosylation. Asparagine 669 carries an N-linked (GlcNAc...) asparagine glycan. Residues isoleucine 729–leucine 749 traverse the membrane as a helical segment. The Cytoplasmic segment spans residues isoleucine 750–lysine 798. The tract at residues glutamate 762–glutamate 767 is signal for sorting from recycling endosomes; interaction with ACAP1. Residue threonine 777 is modified to Phosphothreonine. Tyrosine 783 bears the Phosphotyrosine mark. The residue at position 785 (serine 785) is a Phosphoserine. The interaction with ITGB1BP1 stretch occupies residues serine 785–asparagine 792. A Phosphothreonine modification is found at threonine 789. Lysine 794 carries the post-translational modification N6-acetyllysine; alternate. Residue lysine 794 forms a Glycyl lysine isopeptide (Lys-Gly) (interchain with G-Cter in SUMO1); alternate linkage.

The protein belongs to the integrin beta chain family. In terms of assembly, interacts with seprase FAP (seprase); the interaction occurs at the cell surface of invadopodia membrane in a collagen-dependent manner. Heterodimer of an alpha and a beta subunit. Beta-1 associates with either alpha-1, alpha-2, alpha-3, alpha-4, alpha-5, alpha-6, alpha-7, alpha-8, alpha-9, alpha-10, alpha-11 or alpha-V. ITGA6:ITGB1 is found in a complex with CD9; interaction takes place in oocytes and is involved in sperm-egg fusion. Binds LGALS3BP and NMRK2, when associated with alpha-7, but not with alpha-5. Interacts with FLNA, FLNB, FLNC and RANBP9. Interacts with KRT1 in the presence of RACK1 and SRC. Interacts with JAML; integrin alpha-4/beta-1 may regulate leukocyte to endothelial cells adhesion by controlling JAML homodimerization. Interacts with RAB21. Interacts (via the cytoplasmic region) with RAB25 (via the hypervariable C-terminal region). Interacts with MYO10. Interacts with ITGB1BP1 (via C-terminal region); the interaction is a prerequisite for focal adhesion disassembly. Interacts with TLN1; the interaction is prevented by competitive binding of ITGB1BP1. Interacts with ACAP1; required for ITGB1 recycling. Interacts with ASAP3. Interacts with FERMT2; the interaction is inhibited in presence of ITGB1BP1. Interacts with DAB2. Interacts with FGR and HCK. Interacts with alpha-7A and alpha-7B in adult skeletal muscle. Interacts with alpha-7B in cardiomyocytes of adult heart. Interacts with EMP2; the interaction may be direct or indirect and ITGB1 has a heterodimer form. ITGA5:ITGB1 interacts with CCN3. ITGA4:ITGB1 is found in a ternary complex with CX3CR1 and CX3CL1. ITGA5:ITGB1 interacts with FBN1. ITGA5:ITGB1 acts as a receptor for fibronectin FN1 and mediates R-G-D-dependent cell adhesion to FN1. ITGA5:ITGB1 interacts with IL1B. Interacts with MDK. ITGA4:ITGB1 interacts with MDK; this interaction mediates MDK-induced osteoblast cells migration through PXN phosphorylation. ITGA6:ITGB1 interacts with MDK; this interaction mediates MDK-induced neurite-outgrowth. ITGA5:ITGB1 interacts with ACE2. Interacts with TMEM182 and LAMB1. Interacts with tensin TNS3; TNS3 also interacts with PEAK1, thus acting as an adapter molecule to bridge the association of PEAK1 with ITGB1. Interacts with tensin TNS4; the interaction displaces tensin TNS3 from the ITGB1 cytoplasmic tail and promotes ITGB1 stability. Integrin ITGA9:ITGB1 interacts with SPP1/OPN (via N-terminus). Integrin ITGA9:ITGB1 interacts with TNC/TNFN3 (via the 3rd Fibronectin type-III domain). Integrins ITGA4:ITGB1 and ITGA9:ITGB1 interact with SVEP1 (via Sushi domain 21); thereby inhibit Ca(2+) intracellular signaling and as a result repress vasocontraction. ITGA4:ITGB1 and ITGA5:ITGB1 interacts with SELP. Interacts with CD248. ITGA5:ITGB1 interacts with IGFBP1. ITGA4:ITGB1 interacts with BCAM. Interacts with ADGRG6.

The protein resides in the cell membrane. The protein localises to the cell projection. It localises to the invadopodium membrane. It is found in the ruffle membrane. Its subcellular location is the recycling endosome. The protein resides in the melanosome. The protein localises to the cell junction. It localises to the focal adhesion. It is found in the lamellipodium. Its subcellular location is the ruffle. Its function is as follows. Integrins alpha-1/beta-1, alpha-2/beta-1, alpha-10/beta-1 and alpha-11/beta-1 are receptors for collagen. Integrins alpha-1/beta-1 and alpha-2/beta-2 recognize the proline-hydroxylated sequence G-F-P-G-E-R in collagen. Integrins alpha-2/beta-1, alpha-3/beta-1, alpha-4/beta-1, alpha-5/beta-1, alpha-8/beta-1, alpha-10/beta-1, alpha-11/beta-1 and alpha-V/beta-1 are receptors for fibronectin. Alpha-4/beta-1 recognizes one or more domains within the alternatively spliced CS-1 and CS-5 regions of fibronectin. Integrin alpha-5/beta-1 is a receptor for fibrinogen. Integrin alpha-1/beta-1, alpha-2/beta-1, alpha-6/beta-1 and alpha-7/beta-1 are receptors for lamimin. Integrin alpha-6/beta-1 (ITGA6:ITGB1) is present in oocytes and is involved in sperm-egg fusion. Integrin alpha-4/beta-1 is a receptor for VCAM1 and recognizes the sequence Q-I-D-S in VCAM1. Integrin alpha-9/beta-1 is a receptor for VCAM1, cytotactin and osteopontin. It recognizes the sequence A-E-I-D-G-I-E-L in cytotactin. Integrin alpha-3/beta-1 is a receptor for epiligrin, thrombospondin and CSPG4. Integrin alpha-3/beta-1 provides a docking site for FAP (seprase) at invadopodia plasma membranes in a collagen-dependent manner and hence may participate in the adhesion, formation of invadopodia and matrix degradation processes, promoting cell invasion. Alpha-3/beta-1 may mediate with LGALS3 the stimulation by CSPG4 of endothelial cells migration. Integrin alpha-V/beta-1 is a receptor for vitronectin. Beta-1 integrins recognize the sequence R-G-D in a wide array of ligands. When associated with alpha-7/beta-1 integrin, regulates cell adhesion and laminin matrix deposition. Involved in promoting endothelial cell motility and angiogenesis. Involved in osteoblast compaction through the fibronectin fibrillogenesis cell-mediated matrix assembly process and the formation of mineralized bone nodules. May be involved in up-regulation of the activity of kinases such as PKC via binding to KRT1. Together with KRT1 and RACK1, serves as a platform for SRC activation or inactivation. Plays a mechanistic adhesive role during telophase, required for the successful completion of cytokinesis. ITGA4:ITGB1 binds to fractalkine (CX3CL1) and may act as its coreceptor in CX3CR1-dependent fractalkine signaling. ITGA4:ITGB1 and ITGA5:ITGB1 bind to PLA2G2A via a site (site 2) which is distinct from the classical ligand-binding site (site 1) and this induces integrin conformational changes and enhanced ligand binding to site 1. ITGA5:ITGB1 acts as a receptor for fibrillin-1 (FBN1) and mediates R-G-D-dependent cell adhesion to FBN1. ITGA5:ITGB1 is a receptor for IL1B and binding is essential for IL1B signaling. ITGA5:ITGB3 is a receptor for soluble CD40LG and is required for CD40/CD40LG signaling. Plays an important role in myoblast differentiation and fusion during skeletal myogenesis. ITGA9:ITGB1 may play a crucial role in SVEP1/polydom-mediated myoblast cell adhesion. Integrins ITGA9:ITGB1 and ITGA4:ITGB1 repress PRKCA-mediated L-type voltage-gated channel Ca(2+) influx and ROCK-mediated calcium sensitivity in vascular smooth muscle cells via their interaction with SVEP1, thereby inhibit vasocontraction. In Camelus bactrianus (Bactrian camel), this protein is Integrin beta-1.